A 484-amino-acid polypeptide reads, in one-letter code: Aspartyl/glutamyl-tRNA(Asn/Gln) amidotransferase subunit B (484 aa).

This sequence belongs to the GatB/GatE family. GatB subfamily. Heterotrimer of A, B and C subunits.

The enzyme catalyses L-glutamyl-tRNA(Gln) + L-glutamine + ATP + H2O = L-glutaminyl-tRNA(Gln) + L-glutamate + ADP + phosphate + H(+). It catalyses the reaction L-aspartyl-tRNA(Asn) + L-glutamine + ATP + H2O = L-asparaginyl-tRNA(Asn) + L-glutamate + ADP + phosphate + 2 H(+). Allows the formation of correctly charged Asn-tRNA(Asn) or Gln-tRNA(Gln) through the transamidation of misacylated Asp-tRNA(Asn) or Glu-tRNA(Gln) in organisms which lack either or both of asparaginyl-tRNA or glutaminyl-tRNA synthetases. The reaction takes place in the presence of glutamine and ATP through an activated phospho-Asp-tRNA(Asn) or phospho-Glu-tRNA(Gln). The sequence is that of Aspartyl/glutamyl-tRNA(Asn/Gln) amidotransferase subunit B from Bordetella bronchiseptica (strain ATCC BAA-588 / NCTC 13252 / RB50) (Alcaligenes bronchisepticus).